Here is a 409-residue protein sequence, read N- to C-terminus: Gamma-glutamyl phosphate reductase (409 aa).

Belongs to the gamma-glutamyl phosphate reductase family.

Its subcellular location is the cytoplasm. It carries out the reaction L-glutamate 5-semialdehyde + phosphate + NADP(+) = L-glutamyl 5-phosphate + NADPH + H(+). It functions in the pathway amino-acid biosynthesis; L-proline biosynthesis; L-glutamate 5-semialdehyde from L-glutamate: step 2/2. Its function is as follows. Catalyzes the NADPH-dependent reduction of L-glutamate 5-phosphate into L-glutamate 5-semialdehyde and phosphate. The product spontaneously undergoes cyclization to form 1-pyrroline-5-carboxylate. The polypeptide is Gamma-glutamyl phosphate reductase (Koribacter versatilis (strain Ellin345)).